The sequence spans 110 residues: DNA-binding protein Mhun_3016 (110 aa).

Belongs to the PDCD5 family.

The protein is DNA-binding protein Mhun_3016 of Methanospirillum hungatei JF-1 (strain ATCC 27890 / DSM 864 / NBRC 100397 / JF-1).